The following is a 699-amino-acid chain: Polyribonucleotide nucleotidyltransferase (699 aa).

Mg(2+) is bound by residues Asp485 and Asp491. Residues Pro552 to Ile611 form the KH domain. The S1 motif domain maps to Gly621–Lys689.

This sequence belongs to the polyribonucleotide nucleotidyltransferase family. Component of the RNA degradosome, which is a multiprotein complex involved in RNA processing and mRNA degradation. Mg(2+) serves as cofactor.

It is found in the cytoplasm. The enzyme catalyses RNA(n+1) + phosphate = RNA(n) + a ribonucleoside 5'-diphosphate. In terms of biological role, involved in mRNA degradation. Catalyzes the phosphorolysis of single-stranded polyribonucleotides processively in the 3'- to 5'-direction. The protein is Polyribonucleotide nucleotidyltransferase of Shewanella sp. (strain ANA-3).